Here is a 338-residue protein sequence, read N- to C-terminus: Solute carrier family 35 member G3 (338 aa).

The segment at 1 to 24 is disordered; it reads MAGSHPYFNQPDSTHPSPPSAPPS. Helical transmembrane passes span 37-57, 67-87, 105-125, 160-180, 190-210, 221-241, 250-270, 281-301, and 305-325; these read TSGLLVALLGGGLPAGFVGPL, LPSLELLIWRCLFHLPIALLL, FFCALLNILSIGCAYSAVQVV, CGLLGCILGLIIIVGPGLWTL, ALGYAEAFLGGRALSLGLLVY, TVAFLSGLVGLLGSVPGLFVL, LLSWSCVGAVGILALVSFTCV, LVCAVLHSEVVVALILQYYML, and VAPSDIMGAGVALGSIAIITA. One can recognise an EamA 1 domain in the interval 49 to 174; sequence LPAGFVGPLS…CILGLIIIVG (126 aa). The EamA 2 domain occupies 272-325; sequence YAVTKAHPALVCAVLHSEVVVALILQYYMLHETVAPSDIMGAGVALGSIAIITA.

It belongs to the SLC35G solute transporter family.

It localises to the membrane. This is Solute carrier family 35 member G3 (SLC35G3) from Pan paniscus (Pygmy chimpanzee).